A 264-amino-acid chain; its full sequence is Phosphatidylglycerol--prolipoprotein diacylglyceryl transferase (264 aa).

Helical transmembrane passes span 14 to 34, 57 to 77, 89 to 109, 127 to 147, 176 to 196, 202 to 222, and 235 to 255; these read VGPLSVRWYGLMYLIAFLLFM, LLLYGMLGVVLGGRLGEVLFF, ILAIWKGGMSFHGGFLGVLVA, FIAPLVPTGLAAGRLGNFING, QLYQVAGEGLLLFAILWVYSA, KAVSAMFLIGYGVLRFAAEFF, and LGLSTAQWLCVPMIAVGVGLL. Arg140 serves as a coordination point for a 1,2-diacyl-sn-glycero-3-phospho-(1'-sn-glycerol).

This sequence belongs to the Lgt family.

The protein resides in the cell inner membrane. It catalyses the reaction L-cysteinyl-[prolipoprotein] + a 1,2-diacyl-sn-glycero-3-phospho-(1'-sn-glycerol) = an S-1,2-diacyl-sn-glyceryl-L-cysteinyl-[prolipoprotein] + sn-glycerol 1-phosphate + H(+). The protein operates within protein modification; lipoprotein biosynthesis (diacylglyceryl transfer). Catalyzes the transfer of the diacylglyceryl group from phosphatidylglycerol to the sulfhydryl group of the N-terminal cysteine of a prolipoprotein, the first step in the formation of mature lipoproteins. The chain is Phosphatidylglycerol--prolipoprotein diacylglyceryl transferase from Aromatoleum aromaticum (strain DSM 19018 / LMG 30748 / EbN1) (Azoarcus sp. (strain EbN1)).